A 1021-amino-acid chain; its full sequence is Probable LRR receptor-like serine/threonine-protein kinase RFK1 (1021 aa).

Positions 1 to 39 (MISLYQILAEKKKKKKNDLNIFAFSVFAIICFKFYSVNA) are cleaved as a signal peptide. Over 41–625 (KLPQQEVDAL…PKTGMSPGAY (585 aa)) the chain is Extracellular. N96 is a glycosylation site (N-linked (GlcNAc...) asparagine). 2 LRR repeats span residues 99 to 122 (DCHV…IVKL) and 123 to 146 (PYLR…WASS). Residues N136, N147, and N168 are each glycosylated (N-linked (GlcNAc...) asparagine). LRR repeat units lie at residues 148–168 (LTFI…EFGN), 169–192 (SSLT…LGNL), 193–216 (VHLK…LARL), 218–240 (NMTD…IQNW), and 241–266 (KQLE…VLSN). N218 carries an N-linked (GlcNAc...) asparagine glycan. N-linked (GlcNAc...) asparagine glycosylation is found at N287 and N300. LRR repeat units lie at residues 288-312 (VTGL…LSHL), 313-336 (KELE…AQAE), 338-359 (LRFI…LLRD), and 361-381 (ITVD…RACR). N-linked (GlcNAc...) asparagine glycans are attached at residues N486 and N512. The chain crosses the membrane as a helical span at residues 626 to 646 (IAIGIGAPCLIIFILGFLWIC). The Cytoplasmic portion of the chain corresponds to 647-1021 (GCLPRCGRQR…QERKKEESRP (375 aa)). T670 carries the post-translational modification Phosphothreonine. The Protein kinase domain maps to 681–956 (FNPTNKIGEG…EVVAMLEGLY (276 aa)). ATP-binding positions include 687–695 (IGEGGFGAV) and K709. Y754 carries the phosphotyrosine modification. D807 (proton acceptor) is an active-site residue. The residue at position 840 (S840) is a Phosphoserine. 2 positions are modified to phosphothreonine: T841 and T846. Y854 carries the post-translational modification Phosphotyrosine. Residues 985-1021 (ENNSKTQCSVKSYPSSSSTSSGAGQAVQERKKEESRP) form a disordered region. Positions 993-1005 (SVKSYPSSSSTSS) are enriched in low complexity. Basic and acidic residues predominate over residues 1012–1021 (QERKKEESRP).

The protein belongs to the protein kinase superfamily. Ser/Thr protein kinase family. Mostly expressed in flower buds, especially in stamens.

It is found in the membrane. It carries out the reaction L-seryl-[protein] + ATP = O-phospho-L-seryl-[protein] + ADP + H(+). The enzyme catalyses L-threonyl-[protein] + ATP = O-phospho-L-threonyl-[protein] + ADP + H(+). The chain is Probable LRR receptor-like serine/threonine-protein kinase RFK1 (RKF1) from Arabidopsis thaliana (Mouse-ear cress).